We begin with the raw amino-acid sequence, 196 residues long: Probable nicotinate-nucleotide adenylyltransferase (196 aa).

This sequence belongs to the NadD family.

It carries out the reaction nicotinate beta-D-ribonucleotide + ATP + H(+) = deamido-NAD(+) + diphosphate. The protein operates within cofactor biosynthesis; NAD(+) biosynthesis; deamido-NAD(+) from nicotinate D-ribonucleotide: step 1/1. In terms of biological role, catalyzes the reversible adenylation of nicotinate mononucleotide (NaMN) to nicotinic acid adenine dinucleotide (NaAD). This Thermotoga petrophila (strain ATCC BAA-488 / DSM 13995 / JCM 10881 / RKU-1) protein is Probable nicotinate-nucleotide adenylyltransferase.